The sequence spans 641 residues: Bifunctional protein glk (641 aa).

The glucokinase stretch occupies residues 1–340; it reads MSTGAQTKAA…QLSNRTGGAS (340 aa). 23-28 is an ATP binding site; it reads ADVGGT. The region spanning 341–417 is the HTH rpiR-type domain; the sequence is SAVFERIRQM…LKLATGLTGT (77 aa). Residues 341–641 form a putative HTH-type transcriptional regulator region; sequence SAVFERIRQM…SHGAAPAAKD (301 aa). A DNA-binding region (H-T-H motif) is located at residues 377–396; it reads IVDIARKADVSQPTVIRFCR. Positions 461–600 constitute an SIS domain; the sequence is AIDILNNARR…AVGVAIRRAA (140 aa). Residues 576-596 form a helical membrane-spanning segment; sequence SMISRILHLVMIDILAVGVAI.

This sequence in the N-terminal section; belongs to the bacterial glucokinase family.

It is found in the membrane. The catalysed reaction is D-glucose + ATP = D-glucose 6-phosphate + ADP + H(+). The sequence is that of Bifunctional protein glk (glk) from Burkholderia pseudomallei (strain 1710b).